Here is a 215-residue protein sequence, read N- to C-terminus: Vesicle-trafficking protein SEC22b (215 aa).

At V2–A194 the chain is on the cytoplasmic side. The Longin domain occupies M6 to I119. The residue at position 38 (K38) is an N6-acetyllysine. One can recognise a v-SNARE coiled-coil homology domain in the interval N134–A194. A Phosphoserine modification is found at S137. T140 bears the Phosphothreonine mark. Residues S164, S168, S174, and S177 each carry the phosphoserine modification. A helical; Anchor for type IV membrane protein membrane pass occupies residues K195–L215.

The protein belongs to the synaptobrevin family. As to quaternary structure, interacts with STX17. Component of two distinct SNARE complexes consisting of STX5, GOSR2/BOS1, BET1 and SEC22B or STX18, USE1L, BNIP1/SEC20L and SEC22B. YKT6 can probably replace SEC22B in either complex. Interacts with the COPII Sec23/24 complex composed of SEC23A and SEC24A; recruits SEC22B into COPII-coated vesicles to allow its transport from the endoplasmic reticulum to the Golgi. Interacts with BET1.

It localises to the endoplasmic reticulum membrane. The protein resides in the endoplasmic reticulum-Golgi intermediate compartment membrane. It is found in the golgi apparatus. Its subcellular location is the cis-Golgi network membrane. The protein localises to the trans-Golgi network membrane. It localises to the melanosome. Functionally, SNARE involved in targeting and fusion of ER-derived transport vesicles with the Golgi complex as well as Golgi-derived retrograde transport vesicles with the ER. This Homo sapiens (Human) protein is Vesicle-trafficking protein SEC22b (SEC22B).